The chain runs to 155 residues: Large ribosomal subunit protein uL22c (155 aa).

It belongs to the universal ribosomal protein uL22 family. As to quaternary structure, part of the 50S ribosomal subunit.

The protein resides in the plastid. Its subcellular location is the chloroplast. In terms of biological role, this protein binds specifically to 23S rRNA. The globular domain of the protein is located near the polypeptide exit tunnel on the outside of the subunit, while an extended beta-hairpin is found that lines the wall of the exit tunnel in the center of the 70S ribosome. The chain is Large ribosomal subunit protein uL22c (rpl22) from Nicotiana tomentosiformis (Tobacco).